The primary structure comprises 396 residues: Chalcone synthase (396 aa).

Cys167 is a catalytic residue.

It belongs to the thiolase-like superfamily. Chalcone/stilbene synthases family.

It carries out the reaction (E)-4-coumaroyl-CoA + 3 malonyl-CoA + 3 H(+) = 2',4,4',6'-tetrahydroxychalcone + 3 CO2 + 4 CoA. Its pathway is secondary metabolite biosynthesis; flavonoid biosynthesis. The primary product of this enzyme is 4,2',4',6'-tetrahydroxychalcone (also termed naringenin-chalcone or chalcone) which can under specific conditions spontaneously isomerize into naringenin. The protein is Chalcone synthase (CHS) of Chrysosplenium americanum (American golden saxifrage).